The primary structure comprises 565 residues: CTP synthase (565 aa).

Positions 1–272 (MARPKNVKHI…DLRVMKKLGL (272 aa)) are amidoligase domain. S18 contributes to the CTP binding site. S18 contributes to the UTP binding site. 19 to 24 (SLGKGI) lines the ATP pocket. Y59 provides a ligand contact to L-glutamine. Residue D76 coordinates ATP. Residues D76 and E146 each contribute to the Mg(2+) site. CTP-binding positions include 153–155 (DIE), 193–198 (KTKPTQ), and K229. UTP-binding positions include 193–198 (KTKPTQ) and K229. The Glutamine amidotransferase type-1 domain occupies 299-543 (TIGVCGKYTE…VAAAKEYEKG (245 aa)). G363 lines the L-glutamine pocket. Catalysis depends on C390, which acts as the Nucleophile; for glutamine hydrolysis. Residues 391–394 (LGMQ), E414, and R471 each bind L-glutamine. Active-site residues include H516 and E518.

The protein belongs to the CTP synthase family. In terms of assembly, homotetramer.

The catalysed reaction is UTP + L-glutamine + ATP + H2O = CTP + L-glutamate + ADP + phosphate + 2 H(+). It catalyses the reaction L-glutamine + H2O = L-glutamate + NH4(+). It carries out the reaction UTP + NH4(+) + ATP = CTP + ADP + phosphate + 2 H(+). The protein operates within pyrimidine metabolism; CTP biosynthesis via de novo pathway; CTP from UDP: step 2/2. With respect to regulation, allosterically activated by GTP, when glutamine is the substrate; GTP has no effect on the reaction when ammonia is the substrate. The allosteric effector GTP functions by stabilizing the protein conformation that binds the tetrahedral intermediate(s) formed during glutamine hydrolysis. Inhibited by the product CTP, via allosteric rather than competitive inhibition. Functionally, catalyzes the ATP-dependent amination of UTP to CTP with either L-glutamine or ammonia as the source of nitrogen. Regulates intracellular CTP levels through interactions with the four ribonucleotide triphosphates. The protein is CTP synthase of Chlorobium phaeobacteroides (strain DSM 266 / SMG 266 / 2430).